The primary structure comprises 173 residues: Crossover junction endodeoxyribonuclease RuvC (173 aa).

Active-site residues include Asp8, Glu67, and Asp139. Mg(2+) contacts are provided by Asp8, Glu67, and Asp139.

The protein belongs to the RuvC family. In terms of assembly, homodimer which binds Holliday junction (HJ) DNA. The HJ becomes 2-fold symmetrical on binding to RuvC with unstacked arms; it has a different conformation from HJ DNA in complex with RuvA. In the full resolvosome a probable DNA-RuvA(4)-RuvB(12)-RuvC(2) complex forms which resolves the HJ. Mg(2+) is required as a cofactor.

The protein localises to the cytoplasm. It catalyses the reaction Endonucleolytic cleavage at a junction such as a reciprocal single-stranded crossover between two homologous DNA duplexes (Holliday junction).. The RuvA-RuvB-RuvC complex processes Holliday junction (HJ) DNA during genetic recombination and DNA repair. Endonuclease that resolves HJ intermediates. Cleaves cruciform DNA by making single-stranded nicks across the HJ at symmetrical positions within the homologous arms, yielding a 5'-phosphate and a 3'-hydroxyl group; requires a central core of homology in the junction. The consensus cleavage sequence is 5'-(A/T)TT(C/G)-3'. Cleavage occurs on the 3'-side of the TT dinucleotide at the point of strand exchange. HJ branch migration catalyzed by RuvA-RuvB allows RuvC to scan DNA until it finds its consensus sequence, where it cleaves and resolves the cruciform DNA. The sequence is that of Crossover junction endodeoxyribonuclease RuvC from Aliivibrio salmonicida (strain LFI1238) (Vibrio salmonicida (strain LFI1238)).